Here is a 384-residue protein sequence, read N- to C-terminus: Mannitol-1-phosphate 5-dehydrogenase (384 aa).

Ala4 to Gly15 provides a ligand contact to NAD(+).

The protein belongs to the mannitol dehydrogenase family.

The enzyme catalyses D-mannitol 1-phosphate + NAD(+) = beta-D-fructose 6-phosphate + NADH + H(+). The chain is Mannitol-1-phosphate 5-dehydrogenase from Lacticaseibacillus paracasei (strain ATCC 334 / BCRC 17002 / CCUG 31169 / CIP 107868 / KCTC 3260 / NRRL B-441) (Lactobacillus paracasei).